The sequence spans 337 residues: Glucan endo-1,3-beta-glucosidase, basic isoform 1 (337 aa).

Glu-94 serves as the catalytic Proton donor. Glu-239 (nucleophile) is an active-site residue. The propeptide at 315–337 (VSERVWDISAETNSTASSLISEM) is removed in mature form. Asn-327 is a glycosylation site (N-linked (GlcNAc...) asparagine).

This sequence belongs to the glycosyl hydrolase 17 family.

Its subcellular location is the vacuole. The enzyme catalyses Hydrolysis of (1-&gt;3)-beta-D-glucosidic linkages in (1-&gt;3)-beta-D-glucans.. Is thought to be an important plant defense-related product against fungal pathogens. This is Glucan endo-1,3-beta-glucosidase, basic isoform 1 (GLUB1) from Solanum tuberosum (Potato).